A 763-amino-acid polypeptide reads, in one-letter code: Thyrotropin receptor (763 aa).

The first 21 residues, 1 to 21, serve as a signal peptide directing secretion; the sequence is MRPTPLLRLALFLVLPSSLGG. Residues 22 to 412 are Extracellular-facing; sequence ERCPSPPCEC…EFNPCEDIMG (391 aa). A disulfide bond links Cys31 and Cys41. Residues 51-74 form an LRR 1 repeat; the sequence is PPSTQTLKFIETHLKTIPSRAFSN. Residues Asn77 and Asn99 are each glycosylated (N-linked (GlcNAc...) asparagine). 5 LRR repeats span residues 125 to 150, 151 to 174, 176 to 199, 201 to 223, and 225 to 248; these read LPLL…IYST, DVFF…AFQG, CNET…AFNG, KLDA…AFAG, and YSGP…GLEH. Residues Asn177 and Asn198 are each glycosylated (N-linked (GlcNAc...) asparagine). The N-linked (GlcNAc...) asparagine glycan is linked to Asn302. A Sulfotyrosine modification is found at Tyr384. A helical membrane pass occupies residues 413–440; it reads YKFLRIVVWFVSLLALLGNVFVLVILLT. Residues 441–449 are Cytoplasmic-facing; that stretch reads SHYKLTVPR. Residues 450–472 form a helical membrane-spanning segment; it reads FLMCNLAFADFCMGLYLLLIASV. The Extracellular segment spans residues 473-493; it reads DLYTQSEYYNHAIDWQTGPGC. A disulfide bridge connects residues Cys493 and Cys568. A helical transmembrane segment spans residues 494–516; it reads NTAGFFTVFASELSVYTLTVITL. At 517–536 the chain is on the cytoplasmic side; sequence ERWHAITFAMRLDRKIRLWH. A helical transmembrane segment spans residues 537–559; sequence AYVIMLGGWVCCFLLALLPLVGI. The Extracellular segment spans residues 560 to 579; the sequence is SSYAKVSICLPMDTETPLAL. A helical membrane pass occupies residues 580–601; the sequence is AYIILVLLLNIIAFIIVCACYV. Residues 602–624 lie on the Cytoplasmic side of the membrane; it reads KIYITVRNPHYNPGDKDTRIAKR. The chain crosses the membrane as a helical span at residues 625–648; that stretch reads MAVLIFTDFMCMAPISFYALSALM. Residues 649-659 lie on the Extracellular side of the membrane; that stretch reads NKPLITVTNSK. Residues 660-681 traverse the membrane as a helical segment; that stretch reads ILLVLFYPLNSCANPFLYAIFT. Residues 682 to 763 are Cytoplasmic-facing; that stretch reads KAFQRDVFML…TSKEYKRTVL (82 aa). The disordered stretch occupies residues 742–763; sequence ENSHLTPKQQDQTSKEYKRTVL. The segment covering 744-753 has biased composition (polar residues); that stretch reads SHLTPKQQDQ. Positions 754 to 763 are enriched in basic and acidic residues; the sequence is TSKEYKRTVL. The PDZ-binding motif lies at 761 to 763; sequence TVL.

Belongs to the G-protein coupled receptor 1 family. FSH/LSH/TSH subfamily. In terms of assembly, interacts with heterodimer GPHA2:GPHB5; this interaction stimulates cAMP production. Interacts (via the PDZ-binding motif) with SCRIB; regulates TSHR trafficking and function. Glycosylated. Post-translationally, sulfated. Sulfation on Tyr-384 plays a role in thyrotropin receptor binding and activation.

The protein localises to the cell membrane. Its subcellular location is the basolateral cell membrane. In terms of biological role, receptor for the thyroid-stimulating hormone (TSH) or thyrotropin. Also acts as a receptor for the heterodimeric glycoprotein hormone (GPHA2:GPHB5) or thyrostimulin. The activity of this receptor is mediated by G proteins which activate adenylate cyclase. Plays a central role in controlling thyroid cell metabolism. The sequence is that of Thyrotropin receptor (TSHR) from Bos taurus (Bovine).